Reading from the N-terminus, the 46-residue chain is Large ribosomal subunit protein bL36 (46 aa).

Belongs to the bacterial ribosomal protein bL36 family.

The chain is Large ribosomal subunit protein bL36 from Photorhabdus laumondii subsp. laumondii (strain DSM 15139 / CIP 105565 / TT01) (Photorhabdus luminescens subsp. laumondii).